A 259-amino-acid polypeptide reads, in one-letter code: Sesquipedalian-2 (259 aa).

The PH domain maps to 17–121; that stretch reads PADHMGFLRT…WVKVLSRASF (105 aa). Residues 124 to 149 are a coiled coil; sequence MRLVVRELESQLQDARQSLALQRRSS. The F&amp;H motif lies at 223-235; sequence CFSTLHDWYGQEI.

It belongs to the sesquipedalian family. Forms homodimers and heterodimers with PHETA1. Interacts with OCRL and INPP5B.

The protein localises to the early endosome. Its subcellular location is the recycling endosome. It is found in the golgi apparatus. The protein resides in the trans-Golgi network. It localises to the cytoplasmic vesicle. The protein localises to the clathrin-coated vesicle. Its function is as follows. Plays a role in endocytic trafficking. Required for receptor recycling from endosomes, both to the trans-Golgi network and the plasma membrane. This chain is Sesquipedalian-2, found in Homo sapiens (Human).